Reading from the N-terminus, the 37-residue chain is Cytochrome b6-f complex subunit 5 (37 aa).

The chain crosses the membrane as a helical span at residues 5–25 (LLCGIVLGLIPITLAGLFMAA).

This sequence belongs to the PetG family. The 4 large subunits of the cytochrome b6-f complex are cytochrome b6, subunit IV (17 kDa polypeptide, PetD), cytochrome f and the Rieske protein, while the 4 small subunits are PetG, PetL, PetM and PetN. The complex functions as a dimer.

It is found in the cellular thylakoid membrane. Its function is as follows. Component of the cytochrome b6-f complex, which mediates electron transfer between photosystem II (PSII) and photosystem I (PSI), cyclic electron flow around PSI, and state transitions. PetG is required for either the stability or assembly of the cytochrome b6-f complex. The protein is Cytochrome b6-f complex subunit 5 of Synechococcus elongatus (strain ATCC 33912 / PCC 7942 / FACHB-805) (Anacystis nidulans R2).